Here is a 943-residue protein sequence, read N- to C-terminus: Protein translocase subunit SecA (943 aa).

Residues Gln90, Gly108–Thr112, and Asp509 each bind ATP. The segment at Lys534–Pro576 is disordered. A compositionally biased stretch (low complexity) spans Ala556–Ser570.

The protein belongs to the SecA family. Monomer and homodimer. Part of the essential Sec protein translocation apparatus which comprises SecA, SecYEG and auxiliary proteins SecDF. Other proteins may also be involved.

The protein resides in the cell inner membrane. It localises to the cellular thylakoid membrane. It is found in the cytoplasm. It carries out the reaction ATP + H2O + cellular proteinSide 1 = ADP + phosphate + cellular proteinSide 2.. Its function is as follows. Part of the Sec protein translocase complex. Interacts with the SecYEG preprotein conducting channel. Has a central role in coupling the hydrolysis of ATP to the transfer of proteins into and across the cell membrane, serving as an ATP-driven molecular motor driving the stepwise translocation of polypeptide chains across the membrane. Probably participates in protein translocation into and across both the cytoplasmic and thylakoid membranes in cyanobacterial cells. This is Protein translocase subunit SecA from Prochlorococcus marinus (strain MIT 9515).